We begin with the raw amino-acid sequence, 1002 residues long: MAASTRALFLSCFHGSGGGGGTSEVSRRLVLRPRYPSMPRRPRSAAVAGEGGEGGGGGGDGDLEAAAVGAEEEEKVAVFEVSGMTCAACAGSVEKAVKRLQGIHDAAVDVLGGRAQVVFYPAFVSEEKIRETIQDVGFEAKLIDEEVKEKNILVCRLHIKGMTCTSCASTVESILQVVPGVQRASVALATEEAEIRYDRRIVTASQLTHAVEETGFEAILITTGDDQSRIDLKVDGTLNERSIMIVKSSVQALPGVEDIKVDPELHKITISYKPDQTGPRDLIEVIESAASGDLTVSIYPEADGRQQHRHGEIKRYRQSFLWSLVFTIPVFLTSMVFMYIPGLKDGLEKKVINMMSIGELLRWILSTPVQFVIGRRFYTGAYKALSHGSSNMDVLIALGTNTAYFYSVYSILRAASSHNYMATDFFETSSMLISFILLGKYLEILAKGKTSEAIAKLMDLAPETATMLIYDHEGNVVGEKEIDSRLIQKNDVIKVVPGGKVASDGFVIWGQSHVNESMITGESRPVAKRKGDTVIGGTVNENGVLHVRATFVGSESALAQIVRLVESAQMAKAPVQKFADQISRVFVPLVIILSLLTWLAWFLAGRLHGYPNSWIPSSMDSFQLALQFGISVMVIACPCALGLATPTAVMVATGVGASQGVLIKGGQALESAQKVDCIVFDKTGTLTIGKPVVVNTRLLKNMVLREFYAYVAAAEVNSEHPLGKAVVEHAKKFHSEESHVWTEARDFISVTGHGVKAKISGRAVMVGNKSFMLTSGIDIPVEALEILTEEEEKAQTAIIVAMDQEVVGIISVSDPIKPNAREVISYLKSMKVESIMVTGDNWGTANAISKEVGIENTVAEAKPEQKAEKVKELQSAGRTVAMVGDGINDSPALVSADVGLAIGAGTDVAIEAADIVLMKSNLEDVITAIDLSRKTFFRIRMNYVWALGYNIIGIPIAAGVLFPSTRFRLPPWVAGAAMAASSVSVVCWSLLLRYYKSPKLGR.

The segment covering 32-48 (RPRYPSMPRRPRSAAVA) has biased composition (low complexity). The segment at 32-63 (RPRYPSMPRRPRSAAVAGEGGEGGGGGGDGDL) is disordered. The span at 49–60 (GEGGEGGGGGGD) shows a compositional bias: gly residues. HMA domains are found at residues 75-141 (KVAV…FEAK), 153-219 (LVCR…FEAI), and 228-294 (SRID…SGDL). 4 residues coordinate Cu(+): C86, C89, C164, and C167. A run of 8 helical transmembrane segments spans residues 320-340 (FLWS…FMYI), 354-374 (MMSI…FVIG), 392-412 (MDVL…YSIL), 425-445 (FFET…LEIL), 585-605 (VFVP…FLAG), 624-644 (LALQ…LGLA), 943-963 (YVWA…VLFP), and 972-992 (WVAG…SLLL).

This sequence belongs to the cation transport ATPase (P-type) (TC 3.A.3) family. Type IB subfamily. Expressed in root pericycle cells, xylem region of diffuse vascular bundles in the first node, and vascular tissues of peduncle, rachis and husk.

The protein resides in the cell membrane. The enzyme catalyses Cu(+)(in) + ATP + H2O = Cu(+)(out) + ADP + phosphate + H(+). Copper (Cu) transporter that plays an essential role in promoting translocation of Cu from roots to shoots. Involved in loading Cu to the xylem of the roots and other organs, including panicles. In Oryza sativa subsp. japonica (Rice), this protein is Copper-transporting ATPase HMA5.